Consider the following 124-residue polypeptide: Large ribosomal subunit protein mL51 (124 aa).

A mitochondrion-targeting transit peptide spans 1-31 (MSVFGGLWRSAVNLCQSSRLFSTGSCARIRM).

It belongs to the mitochondrion-specific ribosomal protein mL51 family. Component of the mitochondrial ribosome large subunit (39S) which comprises a 16S rRNA and about 50 distinct proteins.

It is found in the mitochondrion. This Danio rerio (Zebrafish) protein is Large ribosomal subunit protein mL51 (mrpl51).